Consider the following 363-residue polypeptide: Chorismate synthase (363 aa).

Positions 48 and 54 each coordinate NADP(+). FMN is bound by residues 125 to 127 (RSS), 237 to 238 (NA), Gly277, 292 to 296 (KPTSS), and Arg318.

This sequence belongs to the chorismate synthase family. In terms of assembly, homotetramer. The cofactor is FMNH2.

It carries out the reaction 5-O-(1-carboxyvinyl)-3-phosphoshikimate = chorismate + phosphate. It participates in metabolic intermediate biosynthesis; chorismate biosynthesis; chorismate from D-erythrose 4-phosphate and phosphoenolpyruvate: step 7/7. In terms of biological role, catalyzes the anti-1,4-elimination of the C-3 phosphate and the C-6 proR hydrogen from 5-enolpyruvylshikimate-3-phosphate (EPSP) to yield chorismate, which is the branch point compound that serves as the starting substrate for the three terminal pathways of aromatic amino acid biosynthesis. This reaction introduces a second double bond into the aromatic ring system. This chain is Chorismate synthase, found in Pseudomonas paraeruginosa (strain DSM 24068 / PA7) (Pseudomonas aeruginosa (strain PA7)).